The primary structure comprises 340 residues: UDP-N-acetylglucosamine--N-acetylmuramyl-(pentapeptide) pyrophosphoryl-undecaprenol N-acetylglucosamine transferase (340 aa).

UDP-N-acetyl-alpha-D-glucosamine contacts are provided by residues 15 to 17, N127, S184, I230, and Q275; that span reads TGG.

The protein belongs to the glycosyltransferase 28 family. MurG subfamily.

It is found in the cell inner membrane. It carries out the reaction di-trans,octa-cis-undecaprenyl diphospho-N-acetyl-alpha-D-muramoyl-L-alanyl-D-glutamyl-meso-2,6-diaminopimeloyl-D-alanyl-D-alanine + UDP-N-acetyl-alpha-D-glucosamine = di-trans,octa-cis-undecaprenyl diphospho-[N-acetyl-alpha-D-glucosaminyl-(1-&gt;4)]-N-acetyl-alpha-D-muramoyl-L-alanyl-D-glutamyl-meso-2,6-diaminopimeloyl-D-alanyl-D-alanine + UDP + H(+). Its pathway is cell wall biogenesis; peptidoglycan biosynthesis. Functionally, cell wall formation. Catalyzes the transfer of a GlcNAc subunit on undecaprenyl-pyrophosphoryl-MurNAc-pentapeptide (lipid intermediate I) to form undecaprenyl-pyrophosphoryl-MurNAc-(pentapeptide)GlcNAc (lipid intermediate II). This is UDP-N-acetylglucosamine--N-acetylmuramyl-(pentapeptide) pyrophosphoryl-undecaprenol N-acetylglucosamine transferase from Vesicomyosocius okutanii subsp. Calyptogena okutanii (strain HA).